Consider the following 393-residue polypeptide: Short-chain dehydrogenase/reductase family 42E member 1 (393 aa).

Tyr152 serves as the catalytic Proton acceptor. Lys156 is a binding site for NAD(+). Transmembrane regions (helical) follow at residues 282-302 (LPLT…FILG) and 371-391 (GLVI…SVIL).

This sequence belongs to the 3-beta-HSD family.

Its subcellular location is the membrane. In Bos taurus (Bovine), this protein is Short-chain dehydrogenase/reductase family 42E member 1 (SDR42E1).